Consider the following 398-residue polypeptide: Aldo-keto reductase ausK (398 aa).

Residue Asp-76 coordinates NADP(+). Tyr-81 (proton donor) is an active-site residue. His-156 provides a ligand contact to substrate. Residues 186–187, Gln-212, 241–251, and 317–325 each bind NADP(+); these read CN, DALGSGKFQSR, and RKIQHLHDN.

The protein belongs to the aldo/keto reductase family. Aldo/keto reductase 2 subfamily. Homodimer.

Its pathway is secondary metabolite biosynthesis; terpenoid biosynthesis. In terms of biological role, aldo-keto reductase; part of the gene cluster B that mediates the biosynthesis of austinol and dehydroaustinol, two fungal meroterpenoids. The first step of the pathway is the synthesis of 3,5-dimethylorsellinic acid by the polyketide synthase ausA. 3,5-dimethylorsellinic acid is then prenylated by the polyprenyl transferase ausN. Further epoxidation by the FAD-dependent monooxygenase ausM and cyclization by the probable terpene cyclase ausL lead to the formation of protoaustinoid A. Protoaustinoid A is then oxidized to spiro-lactone preaustinoid A3 by the combined action of the FAD-binding monooxygenases ausB and ausC, and the dioxygenase ausE. Acid-catalyzed keto-rearrangement and ring contraction of the tetraketide portion of preaustinoid A3 by ausJ lead to the formation of preaustinoid A4. The aldo-keto reductase ausK, with the help of ausH, is involved in the next step by transforming preaustinoid A4 into isoaustinone which is in turn hydroxylated by the P450 monooxygenase ausI to form austinolide. Finally, the cytochrome P450 monooxygenase ausG modifies austinolide to austinol. Austinol can be further modified to dehydroaustinol which forms a diffusible complex with diorcinol that initiates conidiation. Due to genetic rearrangements of the clusters and the subsequent loss of some enzymes, the end products of the Emericella nidulans austinoid biosynthesis clusters are austinol and dehydroaustinol, even if additional enzymes, such as the O-acetyltransferase ausQ and the cytochrome P450 monooxygenase ausR are still functional. This Emericella nidulans (strain FGSC A4 / ATCC 38163 / CBS 112.46 / NRRL 194 / M139) (Aspergillus nidulans) protein is Aldo-keto reductase ausK.